A 221-amino-acid chain; its full sequence is RNA pyrophosphohydrolase (221 aa).

In terms of domain architecture, Nudix hydrolase spans Gly6–Thr149. Residues Gly38–Gly59 carry the Nudix box motif.

The protein belongs to the Nudix hydrolase family. RppH subfamily. Requires a divalent metal cation as cofactor.

In terms of biological role, accelerates the degradation of transcripts by removing pyrophosphate from the 5'-end of triphosphorylated RNA, leading to a more labile monophosphorylated state that can stimulate subsequent ribonuclease cleavage. The chain is RNA pyrophosphohydrolase from Verminephrobacter eiseniae (strain EF01-2).